A 145-amino-acid chain; its full sequence is 3-hydroxyacyl-[acyl-carrier-protein] dehydratase FabZ (145 aa).

H47 is an active-site residue.

Belongs to the thioester dehydratase family. FabZ subfamily.

It localises to the cytoplasm. It carries out the reaction a (3R)-hydroxyacyl-[ACP] = a (2E)-enoyl-[ACP] + H2O. Its function is as follows. Involved in unsaturated fatty acids biosynthesis. Catalyzes the dehydration of short chain beta-hydroxyacyl-ACPs and long chain saturated and unsaturated beta-hydroxyacyl-ACPs. In Geotalea uraniireducens (strain Rf4) (Geobacter uraniireducens), this protein is 3-hydroxyacyl-[acyl-carrier-protein] dehydratase FabZ.